The sequence spans 123 residues: Small ribosomal subunit protein uS12 (123 aa).

Aspartate 89 is modified (3-methylthioaspartic acid). The disordered stretch occupies residues 104–123 (TAGVKDRKQARSKYGAKRPK). Residues 113 to 123 (ARSKYGAKRPK) are compositionally biased toward basic residues.

It belongs to the universal ribosomal protein uS12 family. As to quaternary structure, part of the 30S ribosomal subunit. Contacts proteins S8 and S17. May interact with IF1 in the 30S initiation complex.

Functionally, with S4 and S5 plays an important role in translational accuracy. Its function is as follows. Interacts with and stabilizes bases of the 16S rRNA that are involved in tRNA selection in the A site and with the mRNA backbone. Located at the interface of the 30S and 50S subunits, it traverses the body of the 30S subunit contacting proteins on the other side and probably holding the rRNA structure together. The combined cluster of proteins S8, S12 and S17 appears to hold together the shoulder and platform of the 30S subunit. The polypeptide is Small ribosomal subunit protein uS12 (Chromobacterium violaceum (strain ATCC 12472 / DSM 30191 / JCM 1249 / CCUG 213 / NBRC 12614 / NCIMB 9131 / NCTC 9757 / MK)).